Reading from the N-terminus, the 330-residue chain is Ketol-acid reductoisomerase (NADP(+)) (330 aa).

The region spanning 2–182 (ARMYYDEDAN…GGTRAGVLET (181 aa)) is the KARI N-terminal Rossmann domain. NADP(+)-binding positions include 25 to 28 (YGSQ), Ser51, Ser53, and 83 to 86 (DEVQ). His108 is a catalytic residue. Position 134 (Gly134) interacts with NADP(+). The KARI C-terminal knotted domain maps to 183–328 (TFREETETDL…QDLRAMMSWL (146 aa)). 4 residues coordinate Mg(2+): Asp191, Glu195, Glu227, and Glu231. A substrate-binding site is contributed by Ser252.

Belongs to the ketol-acid reductoisomerase family. Mg(2+) serves as cofactor.

The catalysed reaction is (2R)-2,3-dihydroxy-3-methylbutanoate + NADP(+) = (2S)-2-acetolactate + NADPH + H(+). It catalyses the reaction (2R,3R)-2,3-dihydroxy-3-methylpentanoate + NADP(+) = (S)-2-ethyl-2-hydroxy-3-oxobutanoate + NADPH + H(+). Its pathway is amino-acid biosynthesis; L-isoleucine biosynthesis; L-isoleucine from 2-oxobutanoate: step 2/4. It functions in the pathway amino-acid biosynthesis; L-valine biosynthesis; L-valine from pyruvate: step 2/4. Functionally, involved in the biosynthesis of branched-chain amino acids (BCAA). Catalyzes an alkyl-migration followed by a ketol-acid reduction of (S)-2-acetolactate (S2AL) to yield (R)-2,3-dihydroxy-isovalerate. In the isomerase reaction, S2AL is rearranged via a Mg-dependent methyl migration to produce 3-hydroxy-3-methyl-2-ketobutyrate (HMKB). In the reductase reaction, this 2-ketoacid undergoes a metal-dependent reduction by NADPH to yield (R)-2,3-dihydroxy-isovalerate. The chain is Ketol-acid reductoisomerase (NADP(+)) from Microcystis aeruginosa (strain NIES-843 / IAM M-2473).